A 145-amino-acid polypeptide reads, in one-letter code: Large ribosomal subunit protein bL19 (145 aa).

This sequence belongs to the bacterial ribosomal protein bL19 family.

This protein is located at the 30S-50S ribosomal subunit interface and may play a role in the structure and function of the aminoacyl-tRNA binding site. This is Large ribosomal subunit protein bL19 from Brachyspira hyodysenteriae (strain ATCC 49526 / WA1).